We begin with the raw amino-acid sequence, 624 residues long: Phosphoenolpyruvate carboxykinase (ATP) 1 (624 aa).

The interval 1-22 (MASPNGGVTTYDYDDSDSAAPV) is disordered. Position 322-329 (322-329 (GLSGTGKT)) interacts with ATP.

Belongs to the phosphoenolpyruvate carboxykinase (ATP) family. In terms of assembly, homohexamer. Green leaves but not in roots or etiolated shoots.

The protein resides in the cytoplasm. The enzyme catalyses oxaloacetate + ATP = phosphoenolpyruvate + ADP + CO2. It functions in the pathway carbohydrate biosynthesis; gluconeogenesis. This chain is Phosphoenolpyruvate carboxykinase (ATP) 1 (PCK1), found in Urochloa panicoides (Panic liverseed grass).